The following is a 222-amino-acid chain: MYKQILTIGYIKFLVVAMDELNYLINYLANKDSVREEILKLSREITRDCAMLIRKIHKSDDKDEFKDKLNEISEKIKKLNSLATFPEFVGYLSTPQQEFVEALSLYMIKFDNKIPSFKELDFIKEENYILGLADVIGELRREVLEAMKNDNLAEVERYFKFMEDLYEFLMNFDYYHVVDNLRRKQDISRGILEKTHGDIVTFIQNLKLREHLKRVQIGLSQE.

This is an uncharacterized protein from Methanocaldococcus jannaschii (strain ATCC 43067 / DSM 2661 / JAL-1 / JCM 10045 / NBRC 100440) (Methanococcus jannaschii).